Consider the following 275-residue polypeptide: Formamidopyrimidine-DNA glycosylase (275 aa).

Pro-2 acts as the Schiff-base intermediate with DNA in catalysis. The active-site Proton donor is Glu-3. Catalysis depends on Lys-58, which acts as the Proton donor; for beta-elimination activity. DNA is bound by residues His-92, Arg-111, and Arg-154. Residues His-239–Val-273 form an FPG-type zinc finger. Arg-263 (proton donor; for delta-elimination activity) is an active-site residue.

This sequence belongs to the FPG family. In terms of assembly, monomer. Zn(2+) serves as cofactor.

The enzyme catalyses Hydrolysis of DNA containing ring-opened 7-methylguanine residues, releasing 2,6-diamino-4-hydroxy-5-(N-methyl)formamidopyrimidine.. It carries out the reaction 2'-deoxyribonucleotide-(2'-deoxyribose 5'-phosphate)-2'-deoxyribonucleotide-DNA = a 3'-end 2'-deoxyribonucleotide-(2,3-dehydro-2,3-deoxyribose 5'-phosphate)-DNA + a 5'-end 5'-phospho-2'-deoxyribonucleoside-DNA + H(+). In terms of biological role, involved in base excision repair of DNA damaged by oxidation or by mutagenic agents. Acts as a DNA glycosylase that recognizes and removes damaged bases. Has a preference for oxidized purines, such as 7,8-dihydro-8-oxoguanine (8-oxoG). Has AP (apurinic/apyrimidinic) lyase activity and introduces nicks in the DNA strand. Cleaves the DNA backbone by beta-delta elimination to generate a single-strand break at the site of the removed base with both 3'- and 5'-phosphates. The protein is Formamidopyrimidine-DNA glycosylase of Pediococcus pentosaceus (strain ATCC 25745 / CCUG 21536 / LMG 10740 / 183-1w).